A 143-amino-acid chain; its full sequence is Large ribosomal subunit protein uL11 (143 aa).

The protein belongs to the universal ribosomal protein uL11 family. As to quaternary structure, part of the ribosomal stalk of the 50S ribosomal subunit. Interacts with L10 and the large rRNA to form the base of the stalk. L10 forms an elongated spine to which L12 dimers bind in a sequential fashion forming a multimeric L10(L12)X complex. One or more lysine residues are methylated.

In terms of biological role, forms part of the ribosomal stalk which helps the ribosome interact with GTP-bound translation factors. The chain is Large ribosomal subunit protein uL11 from Treponema denticola (strain ATCC 35405 / DSM 14222 / CIP 103919 / JCM 8153 / KCTC 15104).